The sequence spans 529 residues: Kunitz-type protease inhibitor 1 (529 aa).

Positions 1–35 are cleaved as a signal peptide; it reads MAPARTMARARLAPAGIPAVALWLLCTLGLQGTQA. The 84-residue stretch at 57–140 folds into the MANSC domain; that stretch reads GVPGFVLDTN…FAPREGFINY (84 aa). Residues Asn-66 and Asn-235 are each glycosylated (N-linked (GlcNAc...) asparagine). Residues 250 to 300 enclose the BPTI/Kunitz inhibitor 1 domain; it reads CLASNKVGRCRGSFPRWYYDPTEQICKSFVYGGCLGNKNNYLREEECILAC. 9 disulfides stabilise this stretch: Cys-250-Cys-300, Cys-259-Cys-283, Cys-275-Cys-296, Cys-335-Cys-347, Cys-342-Cys-360, Cys-354-Cys-369, Cys-391-Cys-441, Cys-400-Cys-424, and Cys-416-Cys-437. Residues 334-370 enclose the LDL-receptor class A domain; sequence TCQPTQFRCSNGCCIDSFLECDDTPNCPDASDEAACE. The 51-residue stretch at 391–441 folds into the BPTI/Kunitz inhibitor 2 domain; sequence CVDLPDTGLCKESIPRWYYNPFSEHCARFTYGGCYGNKNNFEEEQQCLESC. Asn-523 carries an N-linked (GlcNAc...) asparagine glycan.

Interacts with HGFAC. Interacts with TMPRSS13; the interaction promotes the phosphorylation and cell membrane localization of TMPRSS13.

It localises to the secreted. The protein localises to the cytoplasm. The protein resides in the cell membrane. In terms of biological role, inhibitor of HGFAC. Inhibits serine protease activity of ST14/matriptase in vitro. Inhibits serine protease activity of TMPRSS13, via the BPTI/Kunitz inhibitor 1 domain. This Homo sapiens (Human) protein is Kunitz-type protease inhibitor 1 (SPINT1).